The following is a 339-amino-acid chain: Protein LicA (339 aa).

9 repeat units span residues 4–7 (INQS), 8–11 (INQS), 12–15 (INQS), 16–19 (INQS), 20–23 (INQS), 24–27 (INQS), 28–31 (INQS), 32–35 (INQS), and 36–39 (INQS). A 9 X 4 AA tandem repeats of I-N-Q-S region spans residues 4–39 (INQSINQSINQSINQSINQSINQSINQSINQSINQS).

This sequence belongs to the peptidase S49 family.

Functionally, mediates phase variation of the LOS 6A2 and 12D9 epitopes. Phase variation of H.influenza LOS epitopes expressed by LicA is determined by a translational switch. This chain is Protein LicA (licA), found in Haemophilus influenzae.